The chain runs to 202 residues: ATP-dependent dethiobiotin synthetase BioD (202 aa).

12 to 17 (GIGKTI) serves as a coordination point for ATP. T16 serves as a coordination point for Mg(2+). The active site involves K32. S36 contacts substrate. Residues D43, 94 to 97 (EGAG), and 178 to 180 (PVV) contribute to the ATP site. Residues D43 and E94 each coordinate Mg(2+).

The protein belongs to the dethiobiotin synthetase family. Homodimer. Requires Mg(2+) as cofactor.

It localises to the cytoplasm. The catalysed reaction is (7R,8S)-7,8-diammoniononanoate + CO2 + ATP = (4R,5S)-dethiobiotin + ADP + phosphate + 3 H(+). It participates in cofactor biosynthesis; biotin biosynthesis; biotin from 7,8-diaminononanoate: step 1/2. Catalyzes a mechanistically unusual reaction, the ATP-dependent insertion of CO2 between the N7 and N8 nitrogen atoms of 7,8-diaminopelargonic acid (DAPA, also called 7,8-diammoniononanoate) to form a ureido ring. This is ATP-dependent dethiobiotin synthetase BioD from Sphingopyxis alaskensis (strain DSM 13593 / LMG 18877 / RB2256) (Sphingomonas alaskensis).